The sequence spans 78 residues: UPF0335 protein RBE_1185 (78 aa).

It belongs to the UPF0335 family.

This is UPF0335 protein RBE_1185 from Rickettsia bellii (strain RML369-C).